A 137-amino-acid chain; its full sequence is ATP synthase epsilon chain (137 aa).

Belongs to the ATPase epsilon chain family. F-type ATPases have 2 components, CF(1) - the catalytic core - and CF(0) - the membrane proton channel. CF(1) has five subunits: alpha(3), beta(3), gamma(1), delta(1), epsilon(1). CF(0) has three main subunits: a, b and c.

It is found in the cellular thylakoid membrane. Functionally, produces ATP from ADP in the presence of a proton gradient across the membrane. The sequence is that of ATP synthase epsilon chain from Trichodesmium erythraeum (strain IMS101).